Reading from the N-terminus, the 610-residue chain is MTSDKNPYKTEQRMGAVKAVSGPVVIAENMGGSAMYELVQVGSFRLVGEIIRLEGDTATIQVYEETGGLTVGDPVYCTGKPLSLELGPGIMSEIFDGIQRPLDTIYRMVENVFIPRGVQVKSLNDQKQWDFKPCLKVGDLVSGGDIIGSVVENSLMYNHSIMIPPNVRGRVTSIVPSGNYTLQDDIIELEYNGTVKSLKLMHRWPVRTPRPVASKESGNHPLLTGQRVLDALFPSVQGGTCAIPGAFGCGKTVISQALSKFSNSDAVIYVGCGERGNEMAEVLMDFPTLTTVIDGREESIMKRTCLVANTSNMPVAAREASIYTGITLAEYYRDMGKHIAMMADSTSRWAEALREISGRLAEMPADGGYPAYLSARLASFYERAGRVTCIGGPKREGSVTIVGAVSPPGGDFSDPVTSATLGIVQVFWGLEKRLAQRKHFPSVNWLISYSKYLNALEPFFNTLDPDYMRLRSVAAEILQREEELQEIVQLVGKDSLSESDKIILETAKVIREEFLQQNAFTPYDKYCPPYKTCWMLRNIVAFYEESQRVVAESAGELKITWNYIREMIPHIYTGLTEMKFRDPQEGEEANVEFYRKQNEEIVSAFASLLQ.

ATP is bound at residue 245–252; sequence GAFGCGKT.

It belongs to the ATPase alpha/beta chains family. V-ATPase is a heteromultimeric enzyme composed of a peripheral catalytic V1 complex (main components: subunits A, B, C, D, E, and F) attached to an integral membrane V0 proton pore complex (main component: the proteolipid protein).

It carries out the reaction ATP + H2O + 4 H(+)(in) = ADP + phosphate + 5 H(+)(out). Functionally, catalytic subunit of the peripheral V1 complex of vacuolar ATPase. V-ATPase vacuolar ATPase is responsible for acidifying a variety of intracellular compartments in eukaryotic cells. This chain is V-type proton ATPase catalytic subunit A, found in Trypanosoma congolense.